The primary structure comprises 29 residues: GCTPEYCSMWCKVKVSQNYCVKNCKCPGR.

3 disulfide bridges follow: Cys2/Cys20, Cys7/Cys24, and Cys11/Cys26.

The protein belongs to the short scorpion toxin superfamily. Potassium channel inhibitor family. Alpha-KTx 20 subfamily. In terms of tissue distribution, expressed by the venom gland.

It is found in the secreted. Functionally, reduces potassium currents through Kv1.2/KCNA2 and Kv1.3/KCNA3 voltage-gated potassium channels. The chain is Potassium channel toxin alpha-KTx 20.1 from Tityus trivittatus (Argentinean scorpion).